Here is a 178-residue protein sequence, read N- to C-terminus: FXYD domain-containing ion transport regulator 5 (178 aa).

The N-terminal stretch at 1 to 21 is a signal peptide; that stretch reads MSPSGRLCLLTIVGLILPTRG. At 22 to 145 the chain is on the extracellular side; that stretch reads QTLKDTTSSS…FYDEHTLRKR (124 aa). The disordered stretch occupies residues 23–131; sequence TLKDTTSSSS…QTLKPSGFHE (109 aa). 2 stretches are compositionally biased toward low complexity: residues 26–36 and 68–77; these read DTTSSSSADST and TPQPQTQTQQ. The span at 103–125 shows a compositional bias: polar residues; it reads DTTTLSERPSPSTDVQTDPQTLK. Residues 146–164 form a helical membrane-spanning segment; it reads GLLVAAVLFITGIIILTSG. The Cytoplasmic portion of the chain corresponds to 165-178; that stretch reads KCRQLSRLCRNRCR.

The protein belongs to the FXYD family. In terms of assembly, regulatory subunit of the sodium/potassium-transporting ATPase which is composed of a catalytic alpha subunit, a non-catalytic beta subunit and an additional regulatory subunit. The regulatory subunit, a member of the FXYD protein family, modulates the enzymatic activity in a tissue- and isoform-specific way by changing affinities of the Na+/K+-ATPase toward Na(+), K(+) or ATP. In terms of processing, glycosylated.

The protein localises to the cell membrane. It is found in the basolateral cell membrane. Associates with and regulates the activity of the sodium/potassium-transporting ATPase (NKA) which catalyzes the hydrolysis of ATP coupled with the exchange of Na(+) and K(+) ions across the plasma membrane. May increase NKA activity by increasing the apparent affinity for Na(+). Involved in down-regulation of E-cadherin which results in reduced cell adhesion. Promotes metastasis. In Homo sapiens (Human), this protein is FXYD domain-containing ion transport regulator 5 (FXYD5).